The primary structure comprises 203 residues: Holliday junction branch migration complex subunit RuvA (203 aa).

Residues 1 to 62 (MYEYFLGQVT…ENGMSLFGFF (62 aa)) form a domain I region. The interval 63–141 (DADEKALFEK…DLNVDVTGQT (79 aa)) is domain II. The flexible linker stretch occupies residues 142-148 (ALDVDAP). Positions 149 to 203 (AVDGALADALAALEALGYSKADVKKVTKKLETFSQTQGADTNTLLSEGLRLLMKK) are domain III.

Belongs to the RuvA family. As to quaternary structure, homotetramer. Forms an RuvA(8)-RuvB(12)-Holliday junction (HJ) complex. HJ DNA is sandwiched between 2 RuvA tetramers; dsDNA enters through RuvA and exits via RuvB. An RuvB hexamer assembles on each DNA strand where it exits the tetramer. Each RuvB hexamer is contacted by two RuvA subunits (via domain III) on 2 adjacent RuvB subunits; this complex drives branch migration. In the full resolvosome a probable DNA-RuvA(4)-RuvB(12)-RuvC(2) complex forms which resolves the HJ.

It localises to the cytoplasm. In terms of biological role, the RuvA-RuvB-RuvC complex processes Holliday junction (HJ) DNA during genetic recombination and DNA repair, while the RuvA-RuvB complex plays an important role in the rescue of blocked DNA replication forks via replication fork reversal (RFR). RuvA specifically binds to HJ cruciform DNA, conferring on it an open structure. The RuvB hexamer acts as an ATP-dependent pump, pulling dsDNA into and through the RuvAB complex. HJ branch migration allows RuvC to scan DNA until it finds its consensus sequence, where it cleaves and resolves the cruciform DNA. This is Holliday junction branch migration complex subunit RuvA from Lactiplantibacillus plantarum (strain ATCC BAA-793 / NCIMB 8826 / WCFS1) (Lactobacillus plantarum).